Consider the following 261-residue polypeptide: Cytochrome c oxidase subunit 3 (261 aa).

The Mitochondrial matrix segment spans residues 1 to 15; sequence MAHQAHSYHMVDPSP. A helical transmembrane segment spans residues 16–34; it reads WPIFGAAAALLTTSGLIMW. The Mitochondrial intermembrane portion of the chain corresponds to 35–40; that stretch reads FHYSST. Residues 41-66 traverse the membrane as a helical segment; the sequence is TLLTMGLLSMLLVMLQWWRDVVREST. At 67 to 72 the chain is on the mitochondrial matrix side; sequence FQGHHT. Residues 73 to 105 form a helical membrane-spanning segment; the sequence is PTVQKGLRYGMILFITSEAFFFLGFFWAFFHSS. Residues 106-128 lie on the Mitochondrial intermembrane side of the membrane; it reads LAPTPELGGQWPPTGVKPLNPLE. Residues 129 to 152 traverse the membrane as a helical segment; the sequence is VPLLNTAILLASGVTVTWAHHSIT. At 153–155 the chain is on the mitochondrial matrix side; it reads EGN. A helical transmembrane segment spans residues 156 to 183; it reads RKQAIHALTLTILLGFYFTALQAMEYHE. At 184–190 the chain is on the mitochondrial intermembrane side; the sequence is ASFSIAD. Residues 191 to 223 form a helical membrane-spanning segment; that stretch reads SVYGSTFFVATGFHGLHVIIGSSFLTVCLLRLI. The Mitochondrial matrix portion of the chain corresponds to 224 to 232; the sequence is KFHFTPNHH. A helical transmembrane segment spans residues 233–256; that stretch reads FGFEAAAWYWHFVDIIWLFLYMSM. The Mitochondrial intermembrane portion of the chain corresponds to 257–261; it reads YWWGS.

Belongs to the cytochrome c oxidase subunit 3 family. Component of the cytochrome c oxidase (complex IV, CIV), a multisubunit enzyme composed of 14 subunits. The complex is composed of a catalytic core of 3 subunits MT-CO1, MT-CO2 and MT-CO3, encoded in the mitochondrial DNA, and 11 supernumerary subunits COX4I, COX5A, COX5B, COX6A, COX6B, COX6C, COX7A, COX7B, COX7C, COX8 and NDUFA4, which are encoded in the nuclear genome. The complex exists as a monomer or a dimer and forms supercomplexes (SCs) in the inner mitochondrial membrane with NADH-ubiquinone oxidoreductase (complex I, CI) and ubiquinol-cytochrome c oxidoreductase (cytochrome b-c1 complex, complex III, CIII), resulting in different assemblies (supercomplex SCI(1)III(2)IV(1) and megacomplex MCI(2)III(2)IV(2)).

The protein resides in the mitochondrion inner membrane. The catalysed reaction is 4 Fe(II)-[cytochrome c] + O2 + 8 H(+)(in) = 4 Fe(III)-[cytochrome c] + 2 H2O + 4 H(+)(out). Component of the cytochrome c oxidase, the last enzyme in the mitochondrial electron transport chain which drives oxidative phosphorylation. The respiratory chain contains 3 multisubunit complexes succinate dehydrogenase (complex II, CII), ubiquinol-cytochrome c oxidoreductase (cytochrome b-c1 complex, complex III, CIII) and cytochrome c oxidase (complex IV, CIV), that cooperate to transfer electrons derived from NADH and succinate to molecular oxygen, creating an electrochemical gradient over the inner membrane that drives transmembrane transport and the ATP synthase. Cytochrome c oxidase is the component of the respiratory chain that catalyzes the reduction of oxygen to water. Electrons originating from reduced cytochrome c in the intermembrane space (IMS) are transferred via the dinuclear copper A center (CU(A)) of subunit 2 and heme A of subunit 1 to the active site in subunit 1, a binuclear center (BNC) formed by heme A3 and copper B (CU(B)). The BNC reduces molecular oxygen to 2 water molecules using 4 electrons from cytochrome c in the IMS and 4 protons from the mitochondrial matrix. This Gallus gallus (Chicken) protein is Cytochrome c oxidase subunit 3 (MT-CO3).